The following is a 3423-amino-acid chain: Genome polyprotein (3423 aa).

Positions 1–25 are disordered; that stretch reads MKNPKKKSGGFRIVNMLKRGVARVS. Topologically, residues 1–104 are cytoplasmic; the sequence is MKNPKKKSGG…INARKEKKRR (104 aa). The tract at residues 37-72 is hydrophobic; homodimerization of capsid protein C; the sequence is LLLGHGPIRMVLAILAFLRFTAIKPSLGLINRWGSV. Positions 105–122 are cleaved as a propeptide — ER anchor for capsid protein C, removed in mature form by serine protease NS3; the sequence is GTDTSVGIVGLLLTTAMA. The helical transmembrane segment at 105-125 threads the bilayer; the sequence is GTDTSVGIVGLLLTTAMAVEV. At 126-249 the chain is on the extracellular side; it reads TRRGNAYYMY…YTKHLIRVEN (124 aa). The N-linked (GlcNAc...) asparagine; by host glycan is linked to Asn192. A helical membrane pass occupies residues 250-269; that stretch reads WIFRNPGFALAAAAIAWLLG. The Cytoplasmic portion of the chain corresponds to 270 to 274; that stretch reads SSTSQ. A helical transmembrane segment spans residues 275 to 290; the sequence is KVIYLVMILLIAPAYS. Residues 291–745 lie on the Extracellular side of the membrane; the sequence is IRCIGVSNRD…HQIFGAAFKS (455 aa). Residue Lys328 forms a Glycyl lysine isopeptide (Lys-Gly) (interchain with G-Cter in ubiquitin) linkage. Intrachain disulfides connect Cys350-Cys406 and Cys382-Cys411. A fusion peptide region spans residues 388–401; it reads DRGWGNGCGLFGKG. The N-linked (GlcNAc...) asparagine; by host glycan is linked to Asn444. 2 disulfides stabilise this stretch: Cys480–Cys581 and Cys598–Cys629. Residue Lys571 forms a Glycyl lysine isopeptide (Lys-Gly) (interchain with G-Cter in ubiquitin) linkage. A helical membrane pass occupies residues 746–767; sequence LFGGMSWFSQILIGTLLVWLGL. At 768–773 the chain is on the cytoplasmic side; the sequence is NTKNGS. The chain crosses the membrane as a helical span at residues 774–794; the sequence is ISLMCLALGGVLIFLSTAVSA. At 795 to 1177 the chain is on the lumenal side; that stretch reads DVGCSVDFSK…EGLKKRMTTK (383 aa). Intrachain disulfides connect Cys798/Cys809, Cys849/Cys937, Cys973/Cys1017, Cys1074/Cys1123, Cys1085/Cys1106, and Cys1107/Cys1110. N-linked (GlcNAc...) asparagine; by host glycans are attached at residues Asn924 and Asn1001. The helical transmembrane segment at 1178–1198 threads the bilayer; sequence IIISTSMAVLVAMILGGFSMS. At 1199–1220 the chain is on the cytoplasmic side; the sequence is DLAKLAILMGATFAEMNTGGDV. The chain crosses the membrane as a helical span at residues 1221–1241; the sequence is AHLALIAAFKVRPALLVSFIF. Topologically, residues 1242-1270 are lumenal; the sequence is RANWTPRESMLLALASCLLQTAISALEGD. The chain crosses the membrane as a helical span at residues 1271-1291; it reads LMVPINGFALAWLAIRAMVVP. The Cytoplasmic portion of the chain corresponds to 1292–1295; that stretch reads RTDN. The chain crosses the membrane as a helical span at residues 1296-1316; the sequence is ITLAILAALTPLARGTLLVAW. At 1317-1345 the chain is on the lumenal side; it reads RAGLATCGGFMLLSLKGKGSVKKNLPFVM. The helical transmembrane segment at 1346-1366 threads the bilayer; the sequence is ALGLTAVRLVDPINVVGLLLL. At 1367–1373 the chain is on the cytoplasmic side; sequence TRSGKRS. The chain crosses the membrane as a helical span at residues 1374 to 1394; sequence WPPSEVLTAVGLICALAGGFA. The Lumenal portion of the chain corresponds to 1395–1397; that stretch reads KAD. The helical transmembrane segment at 1398 to 1418 threads the bilayer; sequence IEMAGPMAAVGLLIVSYVVSG. Topologically, residues 1419-1472 are cytoplasmic; sequence KSVDMYIERAGDITWEKDAEVTGNSPRLDVALDESGDFSLVEDDGPPMREIILK. The segment at 1425–1464 is interacts with and activates NS3 protease; sequence IERAGDITWEKDAEVTGNSPRLDVALDESGDFSLVEDDGP. Residues 1429 to 1451 form a disordered region; that stretch reads GDITWEKDAEVTGNSPRLDVALD. Residues 1473–1493 constitute an intramembrane region (helical); it reads VVLMAICGMNPIAIPFAAGAW. The Lumenal portion of the chain corresponds to 1494–2170; the sequence is YVYVKTGKRS…KAAAAQLPET (677 aa). The Peptidase S7 domain occupies 1503-1680; sequence SGALWDVPAP…RREEETPVEC (178 aa). Active-site charge relay system; for serine protease NS3 activity residues include His1553, Asp1577, and Ser1637. The region spanning 1683 to 1839 is the Helicase ATP-binding domain; that stretch reads PSMLKKKQLT…DSNSPIMDTE (157 aa). The important for RNA-binding stretch occupies residues 1687 to 1690; that stretch reads KKKQ. 1696–1703 provides a ligand contact to ATP; it reads LHPGAGKT. A DEAH box motif is present at residues 1787 to 1790; it reads DEAH. The Helicase C-terminal domain maps to 1834 to 2013; the sequence is PIMDTEVEVP…GLIASLYRPE (180 aa). Lys1891 bears the N6-acetyllysine; by host mark. Residues 2171 to 2191 traverse the membrane as a helical segment; it reads LETIMLLGLLGTVSLGIFFVL. Residues 2192–2195 are Lumenal-facing; that stretch reads MRNK. An intramembrane region (helical) is located at residues 2196 to 2216; the sequence is GIGKMGFGMVTLGASAWLMWL. The Cytoplasmic segment spans residues 2217-2218; sequence SE. A helical membrane pass occupies residues 2219–2239; it reads IEPARIACVLIVVFLLLVVLI. The Lumenal portion of the chain corresponds to 2240–2254; sequence PEPEKQRSPQDNQMA. The segment at residues 2255 to 2269 is an intramembrane region (helical); it reads IIIMVAVGLLGLITA. Topologically, residues 2270 to 2307 are lumenal; that stretch reads NELGWLERTKSDLSHLMGRREEGATIGFSMDIDLRPAS. Positions 2308–2328 form an intramembrane region, helical; the sequence is AWAIYAALTTFITPAVQHAVT. The Lumenal portion of the chain corresponds to 2329–2344; that stretch reads TSYNNYSLMAMATQAG. The helical transmembrane segment at 2345–2365 threads the bilayer; sequence VLFGMGKGMPFYAWDFGVPLL. Over 2366 to 2375 the chain is Cytoplasmic; sequence MIGCYSQLTP. A helical transmembrane segment spans residues 2376 to 2396; that stretch reads LTLIVAIILLVAHYMYLIPGL. The Lumenal portion of the chain corresponds to 2397-2441; that stretch reads QAAAARAAQKRTAAGIMKNPVVDGIVVTDIDTMTIDPQVEKKMGQ. The chain crosses the membrane as a helical span at residues 2442–2462; it reads VLLIAVAVSSAILSRTAWGWG. The Cytoplasmic portion of the chain corresponds to 2463 to 3423; it reads EAGALITAAT…GEEGSTPGVL (961 aa). Residues 2521 to 2785 form the mRNA cap 0-1 NS5-type MT domain; the sequence is GGGTGETLGE…DVNLGSGTRA (265 aa). Position 2533-2539 (2533-2539) interacts with GTP; the sequence is KARLNQM. S-adenosyl-L-methionine is bound at residue Ser2576. Ser2576 bears the Phosphoserine mark. Residue Lys2581 is the For 2'-O-MTase activity of the active site. The segment at 2597–2600 is SUMO-interacting motif (SIM); sequence VIDL. Positions 2606, 2607, 2624, 2625, 2630, 2631, 2651, 2652, 2666, and 2667 each coordinate S-adenosyl-L-methionine. Residue Asp2666 is the For 2'-O-MTase activity of the active site. 2669 to 2675 is a GTP binding site; the sequence is ESSSSPE. Lys2702 acts as the For 2'-O-MTase activity in catalysis. 2733–2735 contributes to the GTP binding site; the sequence is RNS. The active-site For 2'-O-MTase activity is Glu2738. S-adenosyl-L-methionine is bound at residue Tyr2740. Positions 2908–2914 match the Nuclear localization signal (NLS) motif; the sequence is KHKRPRV. Zn(2+) contacts are provided by Glu2959, His2963, Cys2968, and Cys2971. A RdRp catalytic domain is found at 3049 to 3199; it reads GRMYADDTAG…KPIDDRFAHA (151 aa). Zn(2+)-binding residues include His3234, Cys3250, and Cys3369.

The protein in the N-terminal section; belongs to the class I-like SAM-binding methyltransferase superfamily. mRNA cap 0-1 NS5-type methyltransferase family. In terms of assembly, homodimer. Interacts with host SERTAD3; this interaction promotes capsid protein C degradation. Interacts with host CAPRIN1; this interaction is probably linked to the inhibition of stress granules formation by the virus. Interacts with host G3BP1; this interaction is probably linked to the inhibition of stress granules formation by the virus. Forms heterodimers with envelope protein E in the endoplasmic reticulum and Golgi. Interacts with non-structural protein 2A. As to quaternary structure, homodimer; in the endoplasmic reticulum and Golgi. Interacts with host TYRO3, AXL and DC-SIGN proteins. Interacts with non-structural protein 2A. Interacts with host HAVCR1; this interaction likely mediates virus attachment to host cell. Interacts with host NCAM1. Interacts with host HSPA5. Interacts with Aedes aegypti SRPN25, APY and venom allergen-1 salivary proteins; the interactions do not affect Zika virus replication in human endothelial cells and keratinocytes. In terms of assembly, homodimer; Homohexamer when secreted. Interacts with host TBK1. Interacts with host USP8. Interacts with envelope protein E. Interacts with the structural protein prM/E complex, and the NS2B/NS3 protease complex. As to quaternary structure, forms a heterodimer with serine protease NS3. May form homooligomers. Interacts with human SPCS1. Interacts with non-structural protein 2A. In terms of assembly, forms a heterodimer with NS2B. Interacts with NS4B. Interacts with unphosphorylated RNA-directed RNA polymerase NS5; this interaction stimulates RNA-directed RNA polymerase NS5 guanylyltransferase activity. Interacts with non-structural protein 2A. Interacts with host SHFL; this interaction promotes NS3 degradation via a lysosome-dependent pathway. Interacts with host CEP63; this interaction disorganizes the centrosome and inhibits host innate immune response. May interact with host ANKLE2; the interaction may cause defects in brain development, such as microcephaly. May interact with host SRPRA and SEC61G. As to quaternary structure, interacts with serine protease NS3. Interacts with NS1. In terms of assembly, homodimer. Interacts with host STAT2; this interaction inhibits the phosphorylation of the latter, and, when all viral proteins are present (polyprotein), targets STAT2 for degradation. Interacts with host TBK1 and IKBKE; these interactions lead to the inhibition of the host RIG-I signaling pathway. Interacts with host PAF1 complex; the interaction may prevent the recruitment of the host PAF1 complex to interferon-responsive genes, and thus reduces the immune response. Interacts with serine protease NS3. Interacts with host KPNA2. Interacts with host ZSWIM8; this interaction allows STAT2 binding to ZSWIM8 and subsequent proteasomal degradation leading to inhibition of interferon signaling. Post-translationally, specific enzymatic cleavages in vivo yield mature proteins. Cleavages in the lumen of endoplasmic reticulum are performed by host signal peptidase, whereas cleavages in the cytoplasmic side are performed by serine protease NS3. Signal cleavage at the 2K-4B site requires a prior NS3 protease-mediated cleavage at the 4A-2K site. In terms of processing, cleaved in post-Golgi vesicles by a host furin, releasing the mature small envelope protein M, and peptide pr. This cleavage is incomplete as up to 30% of viral particles still carry uncleaved prM. N-glycosylation plays a role in virulence in mammalian and mosquito hosts, but may have no effect on neurovirulence. Post-translationally, ubiquitination by host TRIM7 promotes virus attachment and fusion of the virus and the host endosome membrane. In terms of processing, N-glycosylated. The excreted form is glycosylated, which is required for efficient secretion of the protein from infected cells. Ubiquitination by host TRIM22 leads to proteasomal degradation. Post-translationally, acetylated by host KAT5. Acetylation modulates NS3 RNA-binding and unwinding activities and plays an important positive role for viral replication. In terms of processing, phosphorylated on serines residues. This phosphorylation may trigger NS5 nuclear localization. Sumoylated, required for regulating IFN induced interferon stimulated genes/ISGs.

The protein resides in the virion. The protein localises to the host nucleus. It is found in the host cytoplasm. Its subcellular location is the host perinuclear region. It localises to the secreted. The protein resides in the virion membrane. The protein localises to the host endoplasmic reticulum membrane. It is found in the host cell surface. The enzyme catalyses a 5'-end (5'-triphosphoguanosine)-ribonucleoside in mRNA + S-adenosyl-L-methionine = a 5'-end (N(7)-methyl 5'-triphosphoguanosine)-ribonucleoside in mRNA + S-adenosyl-L-homocysteine. It carries out the reaction a 5'-end (N(7)-methyl 5'-triphosphoguanosine)-ribonucleoside in mRNA + S-adenosyl-L-methionine = a 5'-end (N(7)-methyl 5'-triphosphoguanosine)-(2'-O-methyl-ribonucleoside) in mRNA + S-adenosyl-L-homocysteine + H(+). The catalysed reaction is RNA(n) + a ribonucleoside 5'-triphosphate = RNA(n+1) + diphosphate. It catalyses the reaction Selective hydrolysis of -Xaa-Xaa-|-Yaa- bonds in which each of the Xaa can be either Arg or Lys and Yaa can be either Ser or Ala.. The enzyme catalyses a ribonucleoside 5'-triphosphate + H2O = a ribonucleoside 5'-diphosphate + phosphate + H(+). It carries out the reaction ATP + H2O = ADP + phosphate + H(+). Functionally, plays a role in virus budding by binding to the cell membrane and gathering the viral RNA into a nucleocapsid that forms the core of the mature virus particle. During virus entry, may induce genome penetration into the host cytoplasm after hemifusion induced by the surface proteins. Can migrate to the cell nucleus where it modulates host functions. Inhibits the integrated stress response (ISR) in the infected cell. Its function is as follows. Inhibits RNA silencing by interfering with host Dicer. Prevents premature fusion activity of envelope proteins in trans-Golgi by binding to envelope protein E at pH 6.0. After virion release in extracellular space, gets dissociated from E dimers. In terms of biological role, plays a role in host immune defense modulation and protection of envelope protein E during virion synthesis. PrM-E cleavage is inefficient, many virions are only partially matured and immature prM-E proteins could play a role in immune evasion. Contributes to fetal microcephaly in humans. Acts as a chaperone for envelope protein E during intracellular virion assembly by masking and inactivating envelope protein E fusion peptide. prM is the only viral peptide matured by host furin in the trans-Golgi network probably to avoid catastrophic activation of the viral fusion activity in acidic Golgi compartment prior to virion release. Functionally, may play a role in virus budding. Exerts cytotoxic effects by activating a mitochondrial apoptotic pathway through M ectodomain. May display a viroporin activity. Its function is as follows. Binds to host cell surface receptors and mediates fusion between viral and cellular membranes. Efficient virus attachment to cell is, at least in part, mediated by host HAVCR1 in a cell-type specific manner. In addition, host NCAM1 can also be used as entry receptor. Interaction with host HSPA5 plays an important role in the early stages of infection as well. Envelope protein is synthesized in the endoplasmic reticulum and forms a heterodimer with protein prM. The heterodimer plays a role in virion budding in the ER, and the newly formed immature particle is covered with 60 spikes composed of heterodimers between precursor prM and envelope protein E. The virion is transported to the Golgi apparatus where the low pH causes the dissociation of PrM-E heterodimers and formation of E homodimers. PrM-E cleavage is inefficient, many virions are only partially matured and immature prM-E proteins could play a role in immune evasion. Plays a role in the inhibition of host RLR-induced interferon-beta activation by targeting TANK-binding kinase 1/TBK1. In addition, recruits the host deubiquitinase USP8 to cleave 'Lys-11'-linked polyubiquitin chains from caspase-1/CASP1 thus inhibiting its proteasomal degradation. In turn, stabilized CASP1 promotes cleavage of cGAS, which inhibits its ability to recognize mitochondrial DNA release and initiate type I interferon signaling. In terms of biological role, component of the viral RNA replication complex that recruits genomic RNA, the structural protein prM/E complex, and the NS2B/NS3 protease complex to the virion assembly site and orchestrates virus morphogenesis. Also antagonizes the host alpha/beta interferon antiviral response. May disrupt adherens junction formation and thereby impair proliferation of radial cells in the host cortex. Functionally, required cofactor for the serine protease function of NS3. Its function is as follows. Displays three enzymatic activities: serine protease, NTPase and RNA helicase. NS3 serine protease, in association with NS2B, performs its autocleavage and cleaves the polyprotein at dibasic sites in the cytoplasm: C-prM, NS2A-NS2B, NS2B-NS3, NS3-NS4A, NS4A-2K and NS4B-NS5. NS3 RNA helicase binds RNA and unwinds dsRNA in the 3' to 5' direction. Leads to translation arrest when expressed ex vivo. Disrupts host centrosome organization in a CEP63-dependent manner to degrade host TBK1 and inhibits innate immune response. Inhibits the integrated stress response (ISR) in the infected cell. Regulates the ATPase activity of the NS3 helicase activity. NS4A allows NS3 helicase to conserve energy during unwinding. Cooperatively with NS4B suppresses the Akt-mTOR pathway and leads to cellular dysregulation. By inhibiting host ANKLE2 functions, may cause defects in brain development, such as microcephaly. Also antagonizes the host MDA5-mediated induction of alpha/beta interferon antiviral response. Leads to translation arrest when expressed ex vivo. Inhibits the integrated stress response (ISR) in the infected cell. In terms of biological role, functions as a signal peptide for NS4B and is required for the interferon antagonism activity of the latter. Functionally, induces the formation of ER-derived membrane vesicles where the viral replication takes place. Also plays a role in the inhibition of host RLR-induced interferon-beta production at TANK-binding kinase 1/TBK1 level. Cooperatively with NS4A suppresses the Akt-mTOR pathway and leads to cellular dysregulation. Its function is as follows. Replicates the viral (+) and (-) RNA genome, and performs the capping of genomes in the cytoplasm. Methylates viral RNA cap at guanine N-7 and ribose 2'-O positions. Once sufficient NS5 is expressed, binds to the cap-proximal structure and inhibits further translation of the viral genome. Besides its role in RNA genome replication, also prevents the establishment of a cellular antiviral state by blocking the interferon-alpha/beta (IFN-alpha/beta) signaling pathway. Mechanistically, interferes with host kinases TBK1 and IKKE upstream of interferon regulatory factor 3/IRF3 to inhibit the RIG-I pathway. Also antagonizes type I interferon signaling by targeting STAT2 for degradation by the proteasome thereby preventing activation of JAK-STAT signaling pathway. Mechanistically, acts as a scaffold protein to connect host ZSWIM8/CUL3 ligase complex and STAT2, leading to STAT2 degradation. Within the host nucleus, disrupts host SUMO1 and STAT2 co-localization with PML, resulting in PML degradation. May also reduce immune responses by preventing the recruitment of the host PAF1 complex to interferon-responsive genes. This Zika virus (isolate ZIKV/Human/Cambodia/FSS13025/2010) (ZIKV) protein is Genome polyprotein.